We begin with the raw amino-acid sequence, 466 residues long: Magnetosome-associated protein MamJ (466 aa).

2 disordered regions span residues 1 to 23 (MAKNRRDRGTDLPGDGDQKISTG) and 60 to 80 (ANQGGLVETAQPPSAPIRSQD). Positions 1-24 (MAKNRRDRGTDLPGDGDQKISTGP) are not required to restore magnetic response to deletion mutant. Residues 25 to 80 (EIVSVTVHPSPNLAAAAKPVQGDIWASLLESSPWSANQGGLVETAQPPSAPIRSQD) are required to restore magnetic response to deletion mutant. Tandem repeat unit repeat units lie at residues 81–168 (PVPV…VEPE) and 169–256 (PAPV…VEPE). Not required to restore magnetic response to deletion mutant regions lie at residues 81–256 (PVPV…VEPE), 136–334 (ETDA…SQAE), 333–374 (AESV…AVEA), and 432–466 (VGSNVVAGTRRLAQTIEVSCGSCSSPKCDAEDKNK). Glu-Pro-rich motif repeat units lie at residues 145-164 (IEPEPALVEPVIEIEAEAAE), 233-252 (IEPEPALVEPVIEIEAEAAE), and 253-272 (VEPEPAPVEPVIEIEAEAAE). Required to restore magnetic response to deletion mutant stretches follow at residues 375–432 (TRQP…GRLV) and 426–466 (VKGG…DKNK).

Belongs to the magnetosome MamJ protein family. Forms homooligomers. Interacts with MamK. Identified by N-terminal sequencing of a protein that is about 96 kDa in size. The protein runs anomalously on protein gels.

It localises to the magnetosome. Functionally, required for assembly of magnetosome chains. Regulates the dynamic behavior of MamK filaments. May connect magnetosomes to MamK filaments. Moves from the cell poles towards midcell; movement does not depend on the treadmilling ability of MamK, suggesting MamJ associates and disassociates continuously from the MamK filament. This chain is Magnetosome-associated protein MamJ, found in Magnetospirillum gryphiswaldense (strain DSM 6361 / JCM 21280 / NBRC 15271 / MSR-1).